A 274-amino-acid chain; its full sequence is Aliphatic sulfonates import ATP-binding protein SsuB 2 (274 aa).

The ABC transporter domain maps to 21–242 (LALRGVARRF…SRGSARLAAL (222 aa)). Residue 53–60 (GRSGCGKS) participates in ATP binding.

This sequence belongs to the ABC transporter superfamily. Aliphatic sulfonates importer (TC 3.A.1.17.2) family. In terms of assembly, the complex is composed of two ATP-binding proteins (SsuB), two transmembrane proteins (SsuC) and a solute-binding protein (SsuA).

The protein resides in the cell inner membrane. The catalysed reaction is ATP + H2O + aliphatic sulfonate-[sulfonate-binding protein]Side 1 = ADP + phosphate + aliphatic sulfonateSide 2 + [sulfonate-binding protein]Side 1.. In terms of biological role, part of the ABC transporter complex SsuABC involved in aliphatic sulfonates import. Responsible for energy coupling to the transport system. This chain is Aliphatic sulfonates import ATP-binding protein SsuB 2, found in Pseudomonas aeruginosa (strain UCBPP-PA14).